Consider the following 393-residue polypeptide: Chorismate synthase (393 aa).

The NADP(+) site is built by arginine 40 and arginine 46. FMN is bound by residues 129–131, 249–250, glycine 301, 316–320, and arginine 342; these read RSS, QA, and KPIPT.

It belongs to the chorismate synthase family. As to quaternary structure, homotetramer. Requires FMNH2 as cofactor.

It carries out the reaction 5-O-(1-carboxyvinyl)-3-phosphoshikimate = chorismate + phosphate. It participates in metabolic intermediate biosynthesis; chorismate biosynthesis; chorismate from D-erythrose 4-phosphate and phosphoenolpyruvate: step 7/7. In terms of biological role, catalyzes the anti-1,4-elimination of the C-3 phosphate and the C-6 proR hydrogen from 5-enolpyruvylshikimate-3-phosphate (EPSP) to yield chorismate, which is the branch point compound that serves as the starting substrate for the three terminal pathways of aromatic amino acid biosynthesis. This reaction introduces a second double bond into the aromatic ring system. The sequence is that of Chorismate synthase from Geobacter sulfurreducens (strain ATCC 51573 / DSM 12127 / PCA).